The chain runs to 446 residues: Phosphoglucosamine mutase (446 aa).

Ser102 acts as the Phosphoserine intermediate in catalysis. Mg(2+) contacts are provided by Ser102, Asp241, Asp243, and Asp245. A Phosphoserine modification is found at Ser102.

Belongs to the phosphohexose mutase family. It depends on Mg(2+) as a cofactor. In terms of processing, activated by phosphorylation.

It catalyses the reaction alpha-D-glucosamine 1-phosphate = D-glucosamine 6-phosphate. Catalyzes the conversion of glucosamine-6-phosphate to glucosamine-1-phosphate. In Xylella fastidiosa (strain M12), this protein is Phosphoglucosamine mutase.